Here is a 341-residue protein sequence, read N- to C-terminus: Probable cytosolic iron-sulfur protein assembly protein Ciao1 (341 aa).

7 WD repeats span residues 12 to 51, 58 to 97, 102 to 141, 151 to 190, 197 to 236, 255 to 294, and 305 to 341; these read GHAGRVWSAAWHPGGKLFASCGEDKTIRVWNKSDTDRWVA, GHTRTIRELAWSCCGHYLASASFDTTVAVWDKKSGEFECN, GHDNEVKSVTWSRSGNLLATCSRDKSVWIWEIHHAPDQED, GHTQDVKKVCWHPQEDLLASASYDNTIRMYRQDLADSEWE, SHSSTVWSISFDATGQRLASCSEDTTVKVWQQYGPDNALG, YHSRSVYDIDWCKQTGLLATACGDDTVRIFREASDSDRNE, and AHSQDANKVAWHPTVPGLLLTASDDGEIKLWQYVDAD.

Belongs to the WD repeat CIA1 family.

Functionally, essential component of the cytosolic iron-sulfur (Fe/S) protein assembly machinery. Required for the maturation of extramitochondrial Fe/S proteins. The sequence is that of Probable cytosolic iron-sulfur protein assembly protein Ciao1 from Anopheles gambiae (African malaria mosquito).